Consider the following 501-residue polypeptide: Trans-cinnamate 4-monooxygenase (501 aa).

The helical transmembrane segment at 3 to 23 (LVLLEKALLGLFAAAVLAVAV) threads the bilayer. (E)-cinnamate-binding positions include 213–218 (RSRLSQ) and Ala302. Position 443 (Cys443) interacts with heme.

It belongs to the cytochrome P450 family. It depends on heme as a cofactor.

It is found in the membrane. It carries out the reaction (E)-cinnamate + reduced [NADPH--hemoprotein reductase] + O2 = (E)-4-coumarate + oxidized [NADPH--hemoprotein reductase] + H2O + H(+). It functions in the pathway phenylpropanoid metabolism; trans-4-coumarate biosynthesis; trans-4-coumarate from trans-cinnamate: step 1/1. Its function is as follows. Catalyzes the first oxidative step of the phenylpropanoid pathway in higher plants by transforming trans-cinnamate into p-coumarate. The compounds formed by this pathway are essential components for lignification, pollination, and defense against ultraviolet light, predators and pathogens. Can also use 2-naphthoic acid as substrate. This is Trans-cinnamate 4-monooxygenase from Sorghum bicolor (Sorghum).